Here is a 157-residue protein sequence, read N- to C-terminus: V-type proton ATPase 16 kDa proteolipid subunit c (157 aa).

Topologically, residues Met1–Tyr10 are lumenal. Residues Gly11–Gly33 traverse the membrane as a helical segment. Residues Thr34 to Ser55 are Cytoplasmic-facing. A helical transmembrane segment spans residues Ile56 to Ile76. Topologically, residues Ala77–His94 are lumenal. Residues Leu95–Gly116 traverse the membrane as a helical segment. At Asp117–Arg128 the chain is on the cytoplasmic side. Residues Leu129–Leu154 form a helical membrane-spanning segment. The Lumenal portion of the chain corresponds to Tyr155–Lys157.

The protein belongs to the V-ATPase proteolipid subunit family. V-ATPase is a heteromultimeric enzyme made up of two complexes: the ATP-hydrolytic V1 complex and the proton translocation V0 complex. The V1 complex consists of three catalytic AB heterodimers that form a heterohexamer, three peripheral stalks each consisting of EG heterodimers, one central rotor including subunits D and F, and the regulatory subunits C and H. The proton translocation complex V0 consists of the proton transport subunit a, a ring of proteolipid subunits c9c'', rotary subunit d, subunits e and f, and the accessory subunits VhaAC45 and ATP6AP2.

The protein localises to the membrane. In terms of biological role, proton-conducting pore forming subunit of the V0 complex of vacuolar(H+)-ATPase (V-ATPase), a multisubunit enzyme composed of a peripheral complex (V1) that hydrolyzes ATP and a membrane integral complex (V0) that translocates protons. V-ATPase is responsible for acidifying and maintaining the pH of intracellular compartments and in some cell types, is targeted to the plasma membrane, where it is responsible for acidifying the extracellular environment. The polypeptide is V-type proton ATPase 16 kDa proteolipid subunit c (Aedes aegypti (Yellowfever mosquito)).